The chain runs to 133 residues: ATP synthase epsilon chain (133 aa).

Positions 81–110 are disordered; the sequence is AAERPEQIDTERARKAKERAEQRLASEHVD.

Belongs to the ATPase epsilon chain family. F-type ATPases have 2 components, CF(1) - the catalytic core - and CF(0) - the membrane proton channel. CF(1) has five subunits: alpha(3), beta(3), gamma(1), delta(1), epsilon(1). CF(0) has three main subunits: a, b and c.

The protein resides in the cell membrane. Functionally, produces ATP from ADP in the presence of a proton gradient across the membrane. The chain is ATP synthase epsilon chain from Shouchella clausii (strain KSM-K16) (Alkalihalobacillus clausii).